The primary structure comprises 90 residues: N(2)-fixation sustaining protein CowN (90 aa).

The protein belongs to the CowN family.

Is required to sustain N(2)-dependent growth in the presence of low levels of carbon monoxide (CO). Probably acts by protecting the N(2) fixation ability of the nitrogenase complex, which is inactivated in the presence of CO. The protein is N(2)-fixation sustaining protein CowN of Halorhodospira halophila (strain DSM 244 / SL1) (Ectothiorhodospira halophila (strain DSM 244 / SL1)).